Here is a 230-residue protein sequence, read N- to C-terminus: Flagellar L-ring protein (230 aa).

The first 21 residues, 1 to 21 (MMLKTVLRLPVCAALLALAAG), serve as a signal peptide directing secretion. The N-palmitoyl cysteine moiety is linked to residue Cys22. Cys22 is lipidated: S-diacylglycerol cysteine. Positions 34–53 (PLTAPPPPPPQPSARPNGSI) are disordered. Residues 36–46 (TAPPPPPPQPS) show a composition bias toward pro residues.

Belongs to the FlgH family. In terms of assembly, the basal body constitutes a major portion of the flagellar organelle and consists of four rings (L,P,S, and M) mounted on a central rod.

It localises to the cell outer membrane. The protein resides in the bacterial flagellum basal body. Assembles around the rod to form the L-ring and probably protects the motor/basal body from shearing forces during rotation. The protein is Flagellar L-ring protein of Bordetella parapertussis (strain 12822 / ATCC BAA-587 / NCTC 13253).